A 399-amino-acid polypeptide reads, in one-letter code: Serine/threonine transporter SstT (399 aa).

9 helical membrane-spanning segments follow: residues 8-28, 37-57, 77-97, 134-154, 178-198, 212-232, 284-304, 312-332, and 348-370; these read LSLV…AFLF, IFGE…VFVL, ILFL…IADL, PVVA…IILG, VIHL…AVTF, LLLV…PIMV, VIIP…ITVL, LGIS…SISA, and VACS…GMVI.

Belongs to the dicarboxylate/amino acid:cation symporter (DAACS) (TC 2.A.23) family.

The protein resides in the cell inner membrane. The catalysed reaction is L-serine(in) + Na(+)(in) = L-serine(out) + Na(+)(out). It catalyses the reaction L-threonine(in) + Na(+)(in) = L-threonine(out) + Na(+)(out). Functionally, involved in the import of serine and threonine into the cell, with the concomitant import of sodium (symport system). The protein is Serine/threonine transporter SstT of Acinetobacter baylyi (strain ATCC 33305 / BD413 / ADP1).